The sequence spans 297 residues: Phospholipid scramblase 2 (297 aa).

A proline-rich domain (PRD) region spans residues Met-1 to Pro-72. Residues Met-1 to Lys-276 are Cytoplasmic-facing. At Thr-149 the chain carries Phosphothreonine; by PKC. S-palmitoyl cysteine attachment occurs at residues Cys-172, Cys-173, Cys-174, Cys-176, and Cys-177. A helical membrane pass occupies residues Met-277 to Phe-293. The Extracellular portion of the chain corresponds to Glu-294–Arg-297.

The protein belongs to the phospholipid scramblase family. Ca(2+) is required as a cofactor. As to expression, expression of isoform 1 seems restricted to testis.

The protein localises to the membrane. It localises to the nucleus. The enzyme catalyses a 1,2-diacyl-sn-glycero-3-phosphocholine(in) = a 1,2-diacyl-sn-glycero-3-phosphocholine(out). May catalyze calcium-induced ATP-independent rapid bidirectional and non-specific movement of phospholipids (lipid scrambling or lipid flip-flop) between the inner and outer leaflet of the plasma membrane. In terms of biological role, has no phospholipid scramblase activity, due to the lack of a N-terminal proline-rich domain. The sequence is that of Phospholipid scramblase 2 from Homo sapiens (Human).